Reading from the N-terminus, the 424-residue chain is Isovaleryl-CoA dehydrogenase, mitochondrial (424 aa).

The transit peptide at 1 to 30 (MATAVRLLGRRVSSWRLRPLPSPLAVPQRA) directs the protein to the mitochondrion. N6-acetyllysine; alternate occurs at positions 56, 65, and 76. Lysine 56, lysine 65, and lysine 76 each carry N6-succinyllysine; alternate. Residues 163 to 172 (LAMSEPNAGS) and 196 to 198 (WIT) contribute to the FAD site. Serine 172 is a substrate binding site. Position 220–221 (220–221 (SR)) interacts with substrate. The residue at position 239 (lysine 239) is an N6-acetyllysine. N6-acetyllysine; alternate is present on lysine 260. Lysine 260 is modified (N6-succinyllysine; alternate). Substrate contacts are provided by residues tyrosine 275 and 282 to 285 (DLER). Glutamate 284 acts as the Proton acceptor in catalysis. An FAD-binding site is contributed by arginine 310. Position 316 is an N6-succinyllysine (lysine 316). Residues glutamine 321 and 378 to 382 (QCLGG) contribute to the FAD site. A substrate-binding site is contributed by 405–406 (GG). 407–409 (TSE) lines the FAD pocket.

The protein belongs to the acyl-CoA dehydrogenase family. As to quaternary structure, homotetramer. Requires FAD as cofactor.

Its subcellular location is the mitochondrion matrix. It catalyses the reaction 3-methylbutanoyl-CoA + oxidized [electron-transfer flavoprotein] + H(+) = 3-methylbut-2-enoyl-CoA + reduced [electron-transfer flavoprotein]. The enzyme catalyses pentanoyl-CoA + oxidized [electron-transfer flavoprotein] + H(+) = (2E)-pentenoyl-CoA + reduced [electron-transfer flavoprotein]. The catalysed reaction is hexanoyl-CoA + oxidized [electron-transfer flavoprotein] + H(+) = (2E)-hexenoyl-CoA + reduced [electron-transfer flavoprotein]. It carries out the reaction butanoyl-CoA + oxidized [electron-transfer flavoprotein] + H(+) = (2E)-butenoyl-CoA + reduced [electron-transfer flavoprotein]. Its pathway is amino-acid degradation; L-leucine degradation; (S)-3-hydroxy-3-methylglutaryl-CoA from 3-isovaleryl-CoA: step 1/3. In terms of biological role, catalyzes the conversion of isovaleryl-CoA/3-methylbutanoyl-CoA to 3-methylbut-2-enoyl-CoA as an intermediate step in the leucine (Leu) catabolic pathway. To a lesser extent, is also able to catalyze the oxidation of other saturated short-chain acyl-CoA thioesters as pentanoyl-CoA, hexenoyl-CoA and butenoyl-CoA. The sequence is that of Isovaleryl-CoA dehydrogenase, mitochondrial (Ivd) from Rattus norvegicus (Rat).